A 223-amino-acid polypeptide reads, in one-letter code: uncharacterized protein (223 aa).

Positions 117–148 are disordered; it reads THAHTHAHTHGHTHTRAHSTHAHTHAHSHYHT.

This is an uncharacterized protein from Homo sapiens (Human).